Here is a 378-residue protein sequence, read N- to C-terminus: Plant intracellular Ras-group-related LRR protein 8 (378 aa).

Positions 10-86 (PTITVQVKFG…VMLMASQGLH (77 aa)) constitute a Ubiquitin-like domain. The disordered stretch occupies residues 85 to 120 (LHQGDGPITKNSSVPAPSTRRASNVKEAQIQKSDTN). Polar residues predominate over residues 93 to 106 (TKNSSVPAPSTRRA). LRR repeat units lie at residues 129–152 (WKAT…VWGC), 153–176 (GSSI…IAAL), 178–201 (SLQK…GLTC), 202–225 (VQTL…LGSI), 226–250 (THLR…LLKH), 252–271 (EILI…IGGC), 272–293 (ESLN…AFGN), 294–317 (LQHL…FFIK), and 319–344 (SQLI…GWEE).

This sequence belongs to the SHOC2 family. In terms of tissue distribution, widely expressed except in panicles.

Functionally, leucine-rich repeat protein that likely mediates protein interactions, possibly in the context of signal transduction. This Oryza sativa subsp. japonica (Rice) protein is Plant intracellular Ras-group-related LRR protein 8 (IRL8).